Reading from the N-terminus, the 602-residue chain is Elongation factor 4 (602 aa).

The 183-residue stretch at 7-189 folds into the tr-type G domain; sequence RNIRNFSIIA…AIVQRIPAPQ (183 aa). Residues 19 to 24 and 136 to 139 each bind GTP; these read DHGKST and NKID.

The protein belongs to the TRAFAC class translation factor GTPase superfamily. Classic translation factor GTPase family. LepA subfamily.

It is found in the cell inner membrane. The enzyme catalyses GTP + H2O = GDP + phosphate + H(+). Required for accurate and efficient protein synthesis under certain stress conditions. May act as a fidelity factor of the translation reaction, by catalyzing a one-codon backward translocation of tRNAs on improperly translocated ribosomes. Back-translocation proceeds from a post-translocation (POST) complex to a pre-translocation (PRE) complex, thus giving elongation factor G a second chance to translocate the tRNAs correctly. Binds to ribosomes in a GTP-dependent manner. The polypeptide is Elongation factor 4 (Xylella fastidiosa (strain M12)).